We begin with the raw amino-acid sequence, 475 residues long: Aspartyl/glutamyl-tRNA(Asn/Gln) amidotransferase subunit B (475 aa).

It belongs to the GatB/GatE family. GatB subfamily. In terms of assembly, heterotrimer of A, B and C subunits.

The catalysed reaction is L-glutamyl-tRNA(Gln) + L-glutamine + ATP + H2O = L-glutaminyl-tRNA(Gln) + L-glutamate + ADP + phosphate + H(+). It catalyses the reaction L-aspartyl-tRNA(Asn) + L-glutamine + ATP + H2O = L-asparaginyl-tRNA(Asn) + L-glutamate + ADP + phosphate + 2 H(+). In terms of biological role, allows the formation of correctly charged Asn-tRNA(Asn) or Gln-tRNA(Gln) through the transamidation of misacylated Asp-tRNA(Asn) or Glu-tRNA(Gln) in organisms which lack either or both of asparaginyl-tRNA or glutaminyl-tRNA synthetases. The reaction takes place in the presence of glutamine and ATP through an activated phospho-Asp-tRNA(Asn) or phospho-Glu-tRNA(Gln). The protein is Aspartyl/glutamyl-tRNA(Asn/Gln) amidotransferase subunit B of Lysinibacillus sphaericus (strain C3-41).